Here is an 875-residue protein sequence, read N- to C-terminus: Neurotrypsin (875 aa).

Positions 1–20 (MTLARFVLALVLGALPEVVX) are cleaved as a signal peptide. An N-linked (GlcNAc...) asparagine glycan is attached at Asn-26. The tract at residues 31–88 (HRPRHSPPTGPHYPYYLPTQQRPPRTRPPPPLPRFPRPPRALPAQRPHALQAGHTPRP) is disordered. Pro residues predominate over residues 56-71 (TRPPPPLPRFPRPPRA). The Kringle domain maps to 93–165 (CPAGEPWVSV…GKVDWGYCDC (73 aa)). 20 disulfide bridges follow: Cys-93/Cys-165, Cys-109/Cys-149, Cys-138/Cys-163, Cys-195/Cys-259, Cys-208/Cys-269, Cys-239/Cys-249, Cys-305/Cys-369, Cys-318/Cys-379, Cys-349/Cys-359, Cys-412/Cys-475, Cys-425/Cys-485, Cys-455/Cys-465, Cys-525/Cys-589, Cys-538/Cys-599, Cys-569/Cys-579, Cys-619/Cys-750, Cys-661/Cys-677, Cys-765/Cys-831, Cys-794/Cys-808, and Cys-821/Cys-850. SRCR domains follow at residues 170–271 (IRLR…TCSF), 280–381 (IRLV…SCTP), 387–487 (IRLA…ACYP), and 500–601 (VRLM…ICDY). A zymogen activation region region spans residues 619–630 (CGLRLLHRRQKR). Residues 631–874 (IIGGKNSLRG…FVPWIKSVTK (244 aa)) enclose the Peptidase S1 domain. Residue His-676 is the Charge relay system of the active site. Asn-683 carries an N-linked (GlcNAc...) asparagine glycan. The Charge relay system role is filled by Asp-726. Ser-825 acts as the Charge relay system in catalysis.

The protein belongs to the peptidase S1 family.

It localises to the secreted. Functionally, plays a role in neuronal plasticity and the proteolytic action may subserve structural reorganizations associated with learning and memory operations. The sequence is that of Neurotrypsin (PRSS12) from Nomascus leucogenys (Northern white-cheeked gibbon).